Reading from the N-terminus, the 234-residue chain is Large ribosomal subunit protein uL1 (234 aa).

The protein belongs to the universal ribosomal protein uL1 family. Part of the 50S ribosomal subunit.

Its function is as follows. Binds directly to 23S rRNA. The L1 stalk is quite mobile in the ribosome, and is involved in E site tRNA release. Protein L1 is also a translational repressor protein, it controls the translation of the L11 operon by binding to its mRNA. This Yersinia pseudotuberculosis serotype O:1b (strain IP 31758) protein is Large ribosomal subunit protein uL1.